Consider the following 107-residue polypeptide: Hydrogenase expression/formation protein HoxL (107 aa).

It belongs to the HupF/HypC family.

The polypeptide is Hydrogenase expression/formation protein HoxL (hoxL) (Cupriavidus necator (strain ATCC 17699 / DSM 428 / KCTC 22496 / NCIMB 10442 / H16 / Stanier 337) (Ralstonia eutropha)).